Consider the following 361-residue polypeptide: Phosphoserine aminotransferase (361 aa).

Arginine 42 contacts L-glutamate. Pyridoxal 5'-phosphate contacts are provided by residues 76–77, tryptophan 102, threonine 153, aspartate 173, and glutamine 196; that span reads AR. Lysine 197 is modified (N6-(pyridoxal phosphate)lysine). 238–239 serves as a coordination point for pyridoxal 5'-phosphate; it reads NT.

This sequence belongs to the class-V pyridoxal-phosphate-dependent aminotransferase family. SerC subfamily. Homodimer. Requires pyridoxal 5'-phosphate as cofactor.

The protein resides in the cytoplasm. It catalyses the reaction O-phospho-L-serine + 2-oxoglutarate = 3-phosphooxypyruvate + L-glutamate. The enzyme catalyses 4-(phosphooxy)-L-threonine + 2-oxoglutarate = (R)-3-hydroxy-2-oxo-4-phosphooxybutanoate + L-glutamate. It participates in amino-acid biosynthesis; L-serine biosynthesis; L-serine from 3-phospho-D-glycerate: step 2/3. Its pathway is cofactor biosynthesis; pyridoxine 5'-phosphate biosynthesis; pyridoxine 5'-phosphate from D-erythrose 4-phosphate: step 3/5. In terms of biological role, catalyzes the reversible conversion of 3-phosphohydroxypyruvate to phosphoserine and of 3-hydroxy-2-oxo-4-phosphonooxybutanoate to phosphohydroxythreonine. This is Phosphoserine aminotransferase from Mannheimia succiniciproducens (strain KCTC 0769BP / MBEL55E).